A 247-amino-acid polypeptide reads, in one-letter code: 1-(5-phosphoribosyl)-5-[(5-phosphoribosylamino)methylideneamino] imidazole-4-carboxamide isomerase (247 aa).

D8 serves as the catalytic Proton acceptor. D131 (proton donor) is an active-site residue.

The protein belongs to the HisA/HisF family.

It is found in the cytoplasm. The enzyme catalyses 1-(5-phospho-beta-D-ribosyl)-5-[(5-phospho-beta-D-ribosylamino)methylideneamino]imidazole-4-carboxamide = 5-[(5-phospho-1-deoxy-D-ribulos-1-ylimino)methylamino]-1-(5-phospho-beta-D-ribosyl)imidazole-4-carboxamide. Its pathway is amino-acid biosynthesis; L-histidine biosynthesis; L-histidine from 5-phospho-alpha-D-ribose 1-diphosphate: step 4/9. The protein is 1-(5-phosphoribosyl)-5-[(5-phosphoribosylamino)methylideneamino] imidazole-4-carboxamide isomerase of Cupriavidus metallidurans (strain ATCC 43123 / DSM 2839 / NBRC 102507 / CH34) (Ralstonia metallidurans).